The chain runs to 349 residues: sn-glycerol-3-phosphate import ATP-binding protein UgpC (349 aa).

Residues 4–235 (ITLKDVHKTY…PATAFVATFI (232 aa)) enclose the ABC transporter domain. ATP is bound at residue 37-44 (GPSGCGKS).

It belongs to the ABC transporter superfamily. sn-glycerol-3-phosphate importer (TC 3.A.1.1.3) family. The complex is composed of two ATP-binding proteins (UgpC), two transmembrane proteins (UgpA and UgpE) and a solute-binding protein (UgpB).

It localises to the cell inner membrane. It catalyses the reaction sn-glycerol 3-phosphate(out) + ATP + H2O = sn-glycerol 3-phosphate(in) + ADP + phosphate + H(+). Its function is as follows. Part of the ABC transporter complex UgpBAEC involved in sn-glycerol-3-phosphate (G3P) import. Responsible for energy coupling to the transport system. The polypeptide is sn-glycerol-3-phosphate import ATP-binding protein UgpC (Rhizobium meliloti (strain 1021) (Ensifer meliloti)).